We begin with the raw amino-acid sequence, 154 residues long: Probable transport accessory protein MmpS4 (154 aa).

The next 2 helical transmembrane spans lie at Ile-19–Val-39 and Gln-97–Ala-117.

Belongs to the MmpS family.

The protein resides in the cell membrane. This is Probable transport accessory protein MmpS4 from Mycobacterium leprae (strain TN).